Here is an 84-residue protein sequence, read N- to C-terminus: Translational regulator CsrA (84 aa).

The protein belongs to the CsrA/RsmA family. Homodimer; the beta-strands of each monomer intercalate to form a hydrophobic core, while the alpha-helices form wings that extend away from the core.

It localises to the cytoplasm. Functionally, a translational regulator that binds mRNA to regulate translation initiation and/or mRNA stability. Usually binds in the 5'-UTR at or near the Shine-Dalgarno sequence preventing ribosome-binding, thus repressing translation. Its main target seems to be the major flagellin gene, while its function is anatagonized by FliW. This is Translational regulator CsrA from Leptospira interrogans serogroup Icterohaemorrhagiae serovar Lai (strain 56601).